The following is a 157-amino-acid chain: Isotocin-neurophysin IT 1 (157 aa).

The first 20 residues, M1–A20, serve as a signal peptide directing secretion. The cysteines at positions 21 and 26 are disulfide-linked. G29 carries the post-translational modification Glycine amide. 7 disulfide bridges follow: C42–C86, C45–C59, C53–C76, C60–C66, C93–C106, C100–C118, and C107–C112.

It belongs to the vasopressin/oxytocin family. Seven disulfide bonds are present in neurophysin.

The protein resides in the secreted. Functionally, isotocin causes contraction of smooth muscles. This Oncorhynchus keta (Chum salmon) protein is Isotocin-neurophysin IT 1.